The chain runs to 319 residues: Acetyl-coenzyme A carboxylase carboxyl transferase subunit alpha (319 aa).

One can recognise a CoA carboxyltransferase C-terminal domain in the interval 39-293 (RLQKKSNDLT…KAVLEKQLHE (255 aa)).

Belongs to the AccA family. In terms of assembly, acetyl-CoA carboxylase is a heterohexamer composed of biotin carboxyl carrier protein (AccB), biotin carboxylase (AccC) and two subunits each of ACCase subunit alpha (AccA) and ACCase subunit beta (AccD).

It is found in the cytoplasm. The enzyme catalyses N(6)-carboxybiotinyl-L-lysyl-[protein] + acetyl-CoA = N(6)-biotinyl-L-lysyl-[protein] + malonyl-CoA. The protein operates within lipid metabolism; malonyl-CoA biosynthesis; malonyl-CoA from acetyl-CoA: step 1/1. Component of the acetyl coenzyme A carboxylase (ACC) complex. First, biotin carboxylase catalyzes the carboxylation of biotin on its carrier protein (BCCP) and then the CO(2) group is transferred by the carboxyltransferase to acetyl-CoA to form malonyl-CoA. The protein is Acetyl-coenzyme A carboxylase carboxyl transferase subunit alpha of Neisseria meningitidis serogroup C / serotype 2a (strain ATCC 700532 / DSM 15464 / FAM18).